The sequence spans 703 residues: 1,4-alpha-glucan-branching enzyme (703 aa).

Residues W93 and K130 each coordinate (1,4-alpha-D-glucosyl)n. D355 acts as the Nucleophile in catalysis. The active-site Proton donor is E415.

It belongs to the glycosyl hydrolase 13 family. GlgB subfamily.

It localises to the cytoplasm. It catalyses the reaction Transfers a segment of a (1-&gt;4)-alpha-D-glucan chain to a primary hydroxy group in a similar glucan chain.. Its pathway is glycan biosynthesis; glycogen biosynthesis. Its function is as follows. Glycogen-branching enzyme participates in the glycogen biosynthetic process along with glycogenin and glycogen synthase. Generates alpha-1,6-glucosidic branches from alpha-1,4-linked glucose chains, to increase solubility of the glycogen polymer. The protein is 1,4-alpha-glucan-branching enzyme (GLC3) of Eremothecium gossypii (strain ATCC 10895 / CBS 109.51 / FGSC 9923 / NRRL Y-1056) (Yeast).